The primary structure comprises 408 residues: Two-pore potassium channel 5 (408 aa).

Disordered stretches follow at residues 1-29 and 58-82; these read MEPLISPQPRFRLQPIPENPSSSSSSASI and QSVQDDKEDQDSDSDETNRFLSQTR. Residues 15–29 show a composition bias toward low complexity; sequence PIPENPSSSSSSASI. Over 22–115 the chain is Stromal; it reads SSSSSASITI…TKKPSPVSKS (94 aa). Residues 63–72 show a composition bias toward acidic residues; sequence DKEDQDSDSD. The helical transmembrane segment at 116–136 threads the bilayer; the sequence is IIRQAIFLLIVYLTLGVSIYS. Positions 152–171 form an intramembrane region, pore-forming; the sequence is DALYFCIVTMCTIGYGDIAP. Residues 178 to 198 form a helical membrane-spanning segment; sequence IFAVVFVLFGFGFLDILLSGV. Residues 199–248 are Stromal-facing; it reads VNYVLDLQESMILTGIQTRQHHQHHHHHRFSAKDYIIDFEKGRMRIRMKV. Residues 249-269 traverse the membrane as a helical segment; sequence CLALCVVVLCIGVGALVLHFV. The pore-forming intramembrane region spans 276–295; the sequence is DSVYLSVMSVTTVGYGDRAF. Residues 302 to 322 form a helical membrane-spanning segment; sequence LFAAVWLLVSTLAVARAFLYL. Residues 323-408 are Stromal-facing; the sequence is AEARIDRRHR…TLPDLLGDPL (86 aa). EF-hand domains lie at 339 to 374 and 378 to 408; these read LNREITVDDLLKADTYQHGFISKSEYIVLKLKEMGK and KDIDQVVIQFEKLDPNQIGKITLPDLLGDPL. Ca(2+) is bound by residues Asp-352, Glu-363, Asp-391, Asn-393, Lys-397, and Asp-402.

Belongs to the two pore domain potassium channel (TC 1.A.1.7) family. In terms of assembly, homodimer. As to expression, expressed in hydathodes and the vascular tissues of roots, stems, leaves and flowers.

It is found in the vacuole membrane. Functionally, probable voltage-independent potassium-selective tonoplast ion channel. This is Two-pore potassium channel 5 (TPK5) from Arabidopsis thaliana (Mouse-ear cress).